Reading from the N-terminus, the 726-residue chain is Methyltransferase FGSG_00040 (726 aa).

TPR repeat units follow at residues 187–220, 224–257, and 258–291; these read SSDI…GQNV, QLAF…AMPS, and EKSL…YPEN. One can recognise an SET domain in the interval 336–531; that stretch reads APVEIRESPG…AKTEIFFCYR (196 aa). Y530 is an S-adenosyl-L-methionine binding site.

Belongs to the class V-like SAM-binding methyltransferase superfamily.

It participates in mycotoxin biosynthesis. Methyltransferase; part of the gene cluster that mediates the biosynthesis of gramillins A and B, bicyclic lipopeptides that induce cell death in maize leaves but not in wheat leaves. The nonribosomal peptide synthetase GRA1 incorporates respectively a glutamic adic (Glu), a leucine (Leu), a serine (Ser), a hydroxyglutamine (HOGln), a 2-amino decanoic acid, and 2 cysteins (CysB and CysA). The biosynthesis of 2-amino decanoic acid incorporated in gramillins could be initiated by a fatty acid synthase composed of the alpha and beta subunits FGSG_00036 and FGSG_11656. The cytochrome P450 monooxygenase FGSG_15680 could hydroxylate the fatty acid chain. Subsequent oxidation to the ketone by the oxidoreductase FGSG_00048 and transamination by aminotransferase FGSG_00049 could form 2-amino-decanoic acid. On the other hand, FGSG_15680 could also be responsible for the HO-modified glutamine at the gamma-position. Whether hydroxylation occurs on the fully assembled product or on the Gln residue prior to assembly into the gramillins requires further proof. The thioredoxin FGSG_00043 could also be required for the disulfide-bond formation between CysA and CysB. The specific involvement of the remaining proteins from the cluster is more difficult to discern, but could have broader regulatory (FGSG_00040 and FGSG_11657) or enzymatic functions (FGSG_00044 and FGSG_00045). The final C-domain of GRA1 does not possess the expected sequence of a termination CT domain, often implicated in macrocyclization and release of a cyclopeptidein fungal NRPs; and the thioesterase FGSG_00047 may act in concert with the terminal C-domain of GRA1 to catalyze the formation of the macrocyclic anhydride and release of the products. In Gibberella zeae (strain ATCC MYA-4620 / CBS 123657 / FGSC 9075 / NRRL 31084 / PH-1) (Wheat head blight fungus), this protein is Methyltransferase FGSG_00040.